Reading from the N-terminus, the 108-residue chain is Translation initiation factor 1A (108 aa).

Residues 11–85 (SVKEVPKPAE…NKCDIIYKYS (75 aa)) form the S1-like domain.

The protein belongs to the eIF-1A family.

Its function is as follows. Seems to be required for maximal rate of protein biosynthesis. Enhances ribosome dissociation into subunits and stabilizes the binding of the initiator Met-tRNA(I) to 40 S ribosomal subunits. In Sulfurisphaera tokodaii (strain DSM 16993 / JCM 10545 / NBRC 100140 / 7) (Sulfolobus tokodaii), this protein is Translation initiation factor 1A (eIF1A).